The primary structure comprises 352 residues: Ubiquitin thioesterase otulin (352 aa).

The disordered stretch occupies residues 1-49 (MSRGTMPQPGAWPGASCAETPAREAGAAARDGGKVTAGAQPRAATRCPA). Over residues 18 to 30 (AETPAREAGAAAR) the composition is skewed to low complexity. The stretch at 49–73 (AEHEEDMYRAADEIEKEKELLIHER) forms a coiled coil. The PIM motif motif lies at 52-57 (EEDMYR). Tyr56 is modified (phosphotyrosine). 2 linear diubiquitin binding regions span residues 95–96 (EW) and 124–126 (RGD). An OTU domain is found at 118–346 (TSIRRVRGDN…DRHYNIPVRV (229 aa)). Asp126 is an active-site residue. Catalysis depends on Cys129, which acts as the Nucleophile. 3 linear diubiquitin binding regions span residues 255 to 259 (FFSVL), 283 to 289 (TGGLEQV), and 336 to 338 (DDR). His339 is an active-site residue. Residues 349–352 (ETSV) carry the PDZ-binding motif.

The protein belongs to the peptidase C65 family. Otulin subfamily. As to quaternary structure, interacts (via the PUB domain) with RNF31 (via the PIM motif); the interaction is direct. Interacts with DVL2. Ubiquitinated. Post-translationally, acetylated. In terms of processing, phosphorylated. Phosphorylation at Tyr-56 prevents interaction with RNF31; dephosphorylation promotes interaction with RNF31 and the LUBAC complex.

Its subcellular location is the cytoplasm. The catalysed reaction is Thiol-dependent hydrolysis of ester, thioester, amide, peptide and isopeptide bonds formed by the C-terminal Gly of ubiquitin (a 76-residue protein attached to proteins as an intracellular targeting signal).. Its function is as follows. Deubiquitinase that specifically removes linear ('Met-1'-linked) polyubiquitin chains to substrates and acts as a regulator of angiogenesis and innate immune response. Required during angiogenesis, craniofacial and neuronal development by regulating the canonical Wnt signaling together with the LUBAC complex. Acts as a negative regulator of NF-kappa-B by regulating the activity of the LUBAC complex. OTULIN function is mainly restricted to homeostasis of the LUBAC complex: acts by removing 'Met-1'-linked autoubiquitination of the LUBAC complex, thereby preventing inactivation of the LUBAC complex. Acts as a key negative regulator of inflammation by restricting spontaneous inflammation and maintaining immune homeostasis. In myeloid cell, required to prevent unwarranted secretion of cytokines leading to inflammation and autoimmunity by restricting linear polyubiquitin formation. Plays a role in innate immune response by restricting linear polyubiquitin formation on LUBAC complex in response to NOD2 stimulation, probably to limit NOD2-dependent pro-inflammatory signaling. This Mus musculus (Mouse) protein is Ubiquitin thioesterase otulin.